We begin with the raw amino-acid sequence, 433 residues long: KH domain-containing, RNA-binding, signal transduction-associated protein 1 (433 aa).

The interval 1-79 is disordered; the sequence is MQRRDDSSAR…PLLPGGAVKM (79 aa). The span at 41 to 76 shows a compositional bias: low complexity; that stretch reads GAQHPQPLLTGGAAAGSSGAQGPAAANPAPLLPGGA. The involved in homodimerization stretch occupies residues 82-243; that stretch reads ENKYLPELMA…VKKFLVPDMM (162 aa). The KH domain maps to 171–197; the sequence is QEETGAKISVLGKGSMRDKAKEEELRK. Disordered stretches follow at residues 259–305, 317–351, and 403–433; these read GVPE…ALVR, AAVA…PPPP, and QDDW…YGRY. Positions 277-300 are enriched in pro residues; sequence APPPPPPVPRGRGVGPPPPPPPPR. Positions 329-342 are enriched in low complexity; that stretch reads VRGAPAPRARAAGI. Residues 424–433 show a composition bias toward basic and acidic residues; that stretch reads AYREHPYGRY.

It belongs to the KHDRBS family. In terms of assembly, self-associates to form homooligomers when bound to RNA, oligomerization appears to be limited when binding to proteins. In terms of processing, tyrosine phosphorylated by several non-receptor tyrosine kinases including LCK, FYN and JAK3. Post-translationally, acetylated. Positively correlates with ability to bind RNA. Methylated by HRMT1L2. Required for nuclear localization.

The protein localises to the nucleus. It localises to the cytoplasm. It is found in the membrane. Functionally, recruited and tyrosine phosphorylated by several receptor systems, for example the T-cell, leptin and insulin receptors. Once phosphorylated, functions as an adapter protein in signal transduction cascades by binding to SH2 and SH3 domain-containing proteins. Role in G2-M progression in the cell cycle. Represses CBP-dependent transcriptional activation apparently by competing with other nuclear factors for binding to CBP. Also acts as a putative regulator of mRNA stability and/or translation rates and mediates mRNA nuclear export. Plays a role in the regulation of alternative splicing and influences mRNA splice site selection and exon inclusion. This is KH domain-containing, RNA-binding, signal transduction-associated protein 1 from Gallus gallus (Chicken).